The primary structure comprises 1372 residues: DNA-directed RNA polymerase subunit beta (1372 aa).

It belongs to the RNA polymerase beta chain family. The RNAP catalytic core consists of 2 alpha, 1 beta, 1 beta' and 1 omega subunit. When a sigma factor is associated with the core the holoenzyme is formed, which can initiate transcription.

The enzyme catalyses RNA(n) + a ribonucleoside 5'-triphosphate = RNA(n+1) + diphosphate. DNA-dependent RNA polymerase catalyzes the transcription of DNA into RNA using the four ribonucleoside triphosphates as substrates. The protein is DNA-directed RNA polymerase subunit beta of Bradyrhizobium diazoefficiens (strain JCM 10833 / BCRC 13528 / IAM 13628 / NBRC 14792 / USDA 110).